Here is a 220-residue protein sequence, read N- to C-terminus: Nicotinamidase (220 aa).

D11 is a catalytic residue. The Zn(2+) site is built by D53, H55, and H94. Residue K119 is part of the active site. The active-site Nucleophile is C163.

The protein belongs to the isochorismatase family.

It is found in the cytoplasm. The protein localises to the nucleus. Its subcellular location is the peroxisome. The enzyme catalyses nicotinamide + H2O = nicotinate + NH4(+). Its pathway is cofactor biosynthesis; nicotinate biosynthesis; nicotinate from nicotinamide: step 1/1. Functionally, catalyzes the deamidation of nicotinamide, an early step in the NAD(+) salvage pathway. The chain is Nicotinamidase (pnc1) from Schizosaccharomyces pombe (strain 972 / ATCC 24843) (Fission yeast).